The sequence spans 433 residues: 23S rRNA (uracil(1939)-C(5))-methyltransferase RlmD (433 aa).

The 53-residue stretch at 1 to 53 (MPTAVIESLDHEGRGIARVEGKAVFIEGGLPGETVEYRVLRSKPNYEQAEATR) folds into the TRAM domain. [4Fe-4S] cluster-binding residues include Cys-66, Cys-72, Cys-75, and Cys-154. Positions 263, 292, 297, 313, 341, and 362 each coordinate S-adenosyl-L-methionine. Residue Cys-389 is the Nucleophile of the active site.

Belongs to the class I-like SAM-binding methyltransferase superfamily. RNA M5U methyltransferase family. RlmD subfamily.

It carries out the reaction uridine(1939) in 23S rRNA + S-adenosyl-L-methionine = 5-methyluridine(1939) in 23S rRNA + S-adenosyl-L-homocysteine + H(+). Functionally, catalyzes the formation of 5-methyl-uridine at position 1939 (m5U1939) in 23S rRNA. In Azoarcus sp. (strain BH72), this protein is 23S rRNA (uracil(1939)-C(5))-methyltransferase RlmD.